The primary structure comprises 141 residues: 6,7-dimethyl-8-ribityllumazine synthase (141 aa).

5-amino-6-(D-ribitylamino)uracil is bound by residues Phe-14, 46–48 (VFD), and 70–72 (CVI). 75-76 (ET) provides a ligand contact to (2S)-2-hydroxy-3-oxobutyl phosphate. Residue His-78 is the Proton donor of the active site. A 5-amino-6-(D-ribitylamino)uracil-binding site is contributed by Leu-103. Position 118 (Arg-118) interacts with (2S)-2-hydroxy-3-oxobutyl phosphate.

As to quaternary structure, forms an icosahedral capsid composed of 60 subunits, arranged as a dodecamer of pentamers.

The catalysed reaction is (2S)-2-hydroxy-3-oxobutyl phosphate + 5-amino-6-(D-ribitylamino)uracil = 6,7-dimethyl-8-(1-D-ribityl)lumazine + phosphate + 2 H2O + H(+). The protein operates within cofactor biosynthesis; riboflavin biosynthesis; riboflavin from 2-hydroxy-3-oxobutyl phosphate and 5-amino-6-(D-ribitylamino)uracil: step 1/2. Catalyzes the formation of 6,7-dimethyl-8-ribityllumazine by condensation of 5-amino-6-(D-ribitylamino)uracil with 3,4-dihydroxy-2-butanone 4-phosphate. This is the penultimate step in the biosynthesis of riboflavin. This is 6,7-dimethyl-8-ribityllumazine synthase (ribH) from Methanocaldococcus jannaschii (strain ATCC 43067 / DSM 2661 / JAL-1 / JCM 10045 / NBRC 100440) (Methanococcus jannaschii).